A 223-amino-acid polypeptide reads, in one-letter code: Ribose-5-phosphate isomerase A (223 aa).

Substrate contacts are provided by residues 32 to 35 (TGST), 85 to 88 (DGAD), and 98 to 101 (KGGG). The Proton acceptor role is filled by glutamate 107. Lysine 125 serves as a coordination point for substrate.

The protein belongs to the ribose 5-phosphate isomerase family. As to quaternary structure, homodimer.

The catalysed reaction is aldehydo-D-ribose 5-phosphate = D-ribulose 5-phosphate. Its pathway is carbohydrate degradation; pentose phosphate pathway; D-ribose 5-phosphate from D-ribulose 5-phosphate (non-oxidative stage): step 1/1. Catalyzes the reversible conversion of ribose-5-phosphate to ribulose 5-phosphate. This Pseudomonas paraeruginosa (strain DSM 24068 / PA7) (Pseudomonas aeruginosa (strain PA7)) protein is Ribose-5-phosphate isomerase A.